The chain runs to 179 residues: Inosine/xanthosine triphosphatase (179 aa).

Glutamate 71 serves as a coordination point for Mg(2+). Residue 71–72 (EA) coordinates substrate.

This sequence belongs to the YjjX NTPase family. In terms of assembly, homodimer. Mg(2+) serves as cofactor. Mn(2+) is required as a cofactor.

The enzyme catalyses XTP + H2O = XDP + phosphate + H(+). The catalysed reaction is ITP + H2O = IDP + phosphate + H(+). Phosphatase that hydrolyzes non-canonical purine nucleotides such as XTP and ITP to their respective diphosphate derivatives. Probably excludes non-canonical purines from DNA/RNA precursor pool, thus preventing their incorporation into DNA/RNA and avoiding chromosomal lesions. This is Inosine/xanthosine triphosphatase from Shewanella sp. (strain MR-4).